Here is a 33-residue protein sequence, read N- to C-terminus: ATP synthase 27 kDa subunit, mitochondrial (33 aa).

Its subcellular location is the mitochondrion. The protein resides in the mitochondrion inner membrane. Its function is as follows. Mitochondrial membrane ATP synthase (F(1)F(0) ATP synthase or Complex V) produces ATP from ADP in the presence of a proton gradient across the membrane which is generated by electron transport complexes of the respiratory chain. F-type ATPases consist of two structural domains, F(1) - containing the extramembraneous catalytic core and F(0) - containing the membrane proton channel, linked together by a central stalk and a peripheral stalk. During catalysis, ATP synthesis in the catalytic domain of F(1) is coupled via a rotary mechanism of the central stalk subunits to proton translocation. Part of the complex F(0) domain. The polypeptide is ATP synthase 27 kDa subunit, mitochondrial (Solanum tuberosum (Potato)).